The chain runs to 185 residues: Phosphatidylglycerophosphatase GEP4, mitochondrial (185 aa).

The Phosphoryl acceptor motif lies at 45 to 49; that stretch reads DKDNC.

It belongs to the GEP4 family.

The protein resides in the mitochondrion inner membrane. The enzyme catalyses a 1,2-diacyl-sn-glycero-3-phospho-(1'-sn-glycero-3'-phosphate) + H2O = a 1,2-diacyl-sn-glycero-3-phospho-(1'-sn-glycerol) + phosphate. Its pathway is phospholipid metabolism; phosphatidylglycerol biosynthesis; phosphatidylglycerol from CDP-diacylglycerol: step 2/2. In terms of biological role, phosphatidylglycerophosphatase involved in the biosynthesis of cardiolipin (CL), a unique dimeric phosphoglycerolipid predominantly present in mitochondrial membranes and which has important functions for cellular energy metabolism, mitochondrial dynamics and the initiation of apoptotic pathways. Required for the stability of respiratory chain supercomplexes and for growth at elevated temperature, in presence of ethidium bromide or in absence of prohibitins. The sequence is that of Phosphatidylglycerophosphatase GEP4, mitochondrial (GEP4) from Saccharomyces cerevisiae (strain ATCC 204508 / S288c) (Baker's yeast).